The primary structure comprises 505 residues: MALSGLGSGPEGNPNNHQGKAIPTLNPSHGQGPSFLFSWVSFLVPFWSWYPFSPLPLKGIPGENSSSPNGLKNFHGIGLNGTERGMGHFHPISGNRLGLRLTLVAGWFLEPFPTFLAVLIRTQGDSTPSRSFVAFFVGTLGLGQEGITGSFNRKIAGPATIDPQDWAMEEGVLTNFLWPPFTTFFRTTKGFPVQWHGEGSFVVPGIFSLPQPLPWWLLLPDTPTGAGKPPESRQHQPSHSMNGAIVDIPGGLTQTPSSPDRSSSTNSIADEEKKLDYKPTSPTSDTEKGESLPLTASQSEIIASPTFSEMIRVIFSGPTLVLGACYFCTFGAELSINSVLGTFYQRQLGLGLQNAGNLAAIFGLLNIVMRPLGGMASDLLYRKTGSVWSKKALLHTYCVMTGVFCIAIGLARSRSQATLVGLVSGGLAFFLEGANGLTYSHVHPYANGVVSGFTGACGNLGGIVFAIVFRYNSLDYSKVFWIIGAIIIGLQVATCWIKPVPKSVI.

Positions 1 to 10 are enriched in gly residues; it reads MALSGLGSGP. The disordered stretch occupies residues 1–25; the sequence is MALSGLGSGPEGNPNNHQGKAIPTL. Residues 35–55 form a helical membrane-spanning segment; sequence FLFSWVSFLVPFWSWYPFSPL. N-linked (GlcNAc...) asparagine glycans are attached at residues asparagine 64 and asparagine 80. The tract at residues 221 to 295 is disordered; sequence DTPTGAGKPP…TEKGESLPLT (75 aa). Over residues 255 to 267 the composition is skewed to low complexity; the sequence is TPSSPDRSSSTNS. Helical transmembrane passes span 313-333, 348-368, 391-411, 417-437, 449-469, and 479-499; these read VIFSGPTLVLGACYFCTFGAE, LGLGLQNAGNLAAIFGLLNIV, KALLHTYCVMTGVFCIAIGLA, ATLVGLVSGGLAFFLEGANGL, VVSGFTGACGNLGGIVFAIVF, and VFWIIGAIIIGLQVATCWIKP.

Belongs to the major facilitator superfamily. Nitrate/nitrite porter (TC 2.A.1.8) family.

The protein localises to the cell membrane. Major facilitator-type transporter; part of the gene cluster that mediates the biosynthesis of elsinochromes, pigments consisting of at least four interconvertible tautomers (A, B, C and D) that have a core phenolic quinone to which various side chains are attached and which play an important role in fungal pathogenesis. Once elsinochrome is synthesized, it must be exported outside the fungal cells, which is probably accomplished by the ECT1 transporter, to avoid toxicity. The protein is Elsinochrome transporter 1 of Elsinoe fawcettii (Citrus scab fungus).